Here is a 476-residue protein sequence, read N- to C-terminus: MESIQSTMKNINLYDIKAAVRKAQNVVMNYTSMEARVREATNNEPWGASTSLMMEIAQGTHNYSQLNEILPMIYRRFTEKTAEEWRQIYKALQLLEFLVKNGSERVVDDARAHQATIKMLRNFHYIDHRQKDQGLNVRTRAKELVELLNDSERIRKERKRARQNRGKFIGVGSDGDSRISTSSKSRFPSFGSSRGSYRTRVYGDGGGFTDYGNGYHDSSSMSDSRDASDNDVEEYNEDGDGGSSDAATANSTRGSRRTTTKQSDKAPEQPKQESAMIDLLGLDNEPSPAQPQTNTSAPLAFEDDGFGDFQSSAAAPASSTLNNASLFMGSQTASTAAKNDDDAFDDFQSAPSAKPASNTAAFSSISFGGFNSLNQLPTSSSAFTPQPTTFNTGYTSAFGMSSGLSNTSSQAGLGLTSQQPTAAKSSGSNGDAFGSLWSSAVNKVHQENSTRERVVSSSSEPVSKTQNFLDNDNLLL.

The 125-residue stretch at 30–154 (YTSMEARVRE…VELLNDSERI (125 aa)) folds into the ENTH domain. 4 disordered regions span residues 157 to 198 (ERKR…GSYR), 213 to 308 (NGYH…GFGD), 410 to 429 (QAGL…SGSN), and 444 to 472 (VHQE…LDND). The residue at position 173 (Ser173) is a Phosphoserine. Low complexity-rich tracts occupy residues 178–198 (RIST…GSYR) and 213–222 (NGYHDSSSMS). Ser228 carries the post-translational modification Phosphoserine. Residues 229 to 240 (DNDVEEYNEDGD) are compositionally biased toward acidic residues. Tyr235 is subject to Phosphotyrosine. Residues Ser243 and Ser244 each carry the phosphoserine modification. Basic and acidic residues predominate over residues 262–271 (QSDKAPEQPK). Basic and acidic residues predominate over residues 444-454 (VHQENSTRERV). Residue Ser459 is modified to Phosphoserine.

The sequence is that of ENTH domain-containing protein C794.11c from Schizosaccharomyces pombe (strain 972 / ATCC 24843) (Fission yeast).